A 124-amino-acid polypeptide reads, in one-letter code: Apolipoprotein C-IV (124 aa).

The N-terminal stretch at 1–27 (MSLLRCRPRDLPSVSLSVLFLVSFVAS) is a signal peptide. The N-linked (GlcNAc...) asparagine glycan is linked to Asn-107.

This sequence belongs to the apolipoprotein C4 family. In terms of tissue distribution, expressed by the liver and secreted in plasma.

It localises to the secreted. May participate in lipoprotein metabolism. This is Apolipoprotein C-IV (Apoc4) from Mus musculus (Mouse).